Consider the following 179-residue polypeptide: Large ribosomal subunit protein uL5 (179 aa).

This sequence belongs to the universal ribosomal protein uL5 family. Part of the 50S ribosomal subunit; part of the 5S rRNA/L5/L18/L25 subcomplex. Contacts the 5S rRNA and the P site tRNA. Forms a bridge to the 30S subunit in the 70S ribosome.

Functionally, this is one of the proteins that bind and probably mediate the attachment of the 5S RNA into the large ribosomal subunit, where it forms part of the central protuberance. In the 70S ribosome it contacts protein S13 of the 30S subunit (bridge B1b), connecting the 2 subunits; this bridge is implicated in subunit movement. Contacts the P site tRNA; the 5S rRNA and some of its associated proteins might help stabilize positioning of ribosome-bound tRNAs. This Acidovorax ebreus (strain TPSY) (Diaphorobacter sp. (strain TPSY)) protein is Large ribosomal subunit protein uL5.